A 365-amino-acid polypeptide reads, in one-letter code: Prostaglandin E2 receptor EP3 subtype (365 aa).

The disordered stretch occupies residues 1–22 (MASMWAPEHSAEAHSNLSSTTD). Residues 1–30 (MASMWAPEHSAEAHSNLSSTTDDCGSVSVA) lie on the Extracellular side of the membrane. A compositionally biased stretch (polar residues) spans 13–22 (AHSNLSSTTD). Asn16 carries an N-linked (GlcNAc...) asparagine glycan. The helical transmembrane segment at 31-55 (FPITMMVTGFVGNALAMLLVSRSYR) threads the bilayer. Topologically, residues 56 to 68 (RRESKRKKSFLLC) are cytoplasmic. A helical transmembrane segment spans residues 69 to 89 (IGWLALTDLVGQLLTSPVVIL). Residues 90–108 (VYLSQRRWEQLDPSGRLCT) are Extracellular-facing. An intrachain disulfide couples Cys107 to Cys184. A helical transmembrane segment spans residues 109–130 (FFGLTMTVFGLSSLLVASAMAV). Topologically, residues 131–151 (ERALAIRAPHWYASHMKTRAT) are cytoplasmic. Residues 152-173 (PVLLGVWLSVLAFALLPVLGVG) traverse the membrane as a helical segment. The Extracellular portion of the chain corresponds to 174–203 (RYSVQWPGTWCFISTGPAGNETDPAREPGS). Asn193 is a glycosylation site (N-linked (GlcNAc...) asparagine). Residues 204-229 (VAFASAFACLGLLALVVTFACNLATI) traverse the membrane as a helical segment. The Cytoplasmic portion of the chain corresponds to 230–259 (KALVSRCRAKAAVSQSSAQWGRITTETAIQ). The chain crosses the membrane as a helical span at residues 260 to 283 (LMGIMCVLSVCWSPLLIMMLKMIF). Topologically, residues 284 to 303 (NQMSVEQCKTQMGKEKECNS) are extracellular. The chain crosses the membrane as a helical span at residues 304–325 (FLIAVRLASLNQILDPWVYLLL). Over 326-365 (RKILLRKFCQIRDHTNYASSSTSLPCPGSSALMWSDQLER) the chain is Cytoplasmic.

It belongs to the G-protein coupled receptor 1 family. Interacts (via C-terminus) with MKLN1. Post-translationally, ligand binding is affected by cAMP-dependent phosphorylation in brain membranes. As to expression, detected in platelets. Kidney, uterus, and mastocytoma cells, and in a lesser amount in brain, thymus, lung, heart, stomach and spleen.

Its subcellular location is the cell membrane. Its function is as follows. Receptor for prostaglandin E2 (PGE2). Required for normal development of fever in response to pyrinogens, including IL1B, prostaglandin E2 and bacterial lipopolysaccharide (LPS). Required for normal potentiation of platelet aggregation by prostaglandin E2, and thus plays a role in the regulation of blood coagulation. Required for increased HCO3(-) secretion in the duodenum in response to mucosal acidification, and thereby contributes to the protection of the mucosa against acid-induced ulceration. Not required for normal kidney function, normal urine volume and osmolality. Receptor for prostaglandin E2 (PGE2); ligand binding activates a signaling cascade via G(i) proteins that leads to inhibition of adenylate cyclase. Shows high agonist-independent constitutive inhibition of adenylate cyclase. In terms of biological role, receptor for prostaglandin E2 (PGE2); ligand binding activates a signaling cascade via G(i) proteins that leads to inhibition of adenylate cyclase. Requires much higher ligand concentrations than isoform Alpha for activation. Does not display agonist-independent constitutive inhibition of adenylate cyclase. Functionally, receptor for prostaglandin E2 (PGE2); ligand binding can activate several distinct signaling cascades, resulting in activation or inhibition of adenylate cyclase. This Mus musculus (Mouse) protein is Prostaglandin E2 receptor EP3 subtype (Ptger3).